The following is a 310-amino-acid chain: Glutaminase 1 (310 aa).

Substrate is bound by residues Ser-66, Asn-117, Glu-161, Asn-168, Tyr-192, Tyr-244, and Val-262. Lys-294 bears the N6-acetyllysine mark.

Belongs to the glutaminase family. As to quaternary structure, homotetramer.

It catalyses the reaction L-glutamine + H2O = L-glutamate + NH4(+). The polypeptide is Glutaminase 1 (Escherichia coli (strain K12)).